Here is a 184-residue protein sequence, read N- to C-terminus: Putative DNA-directed RNA polymerase subunit 454R (184 aa).

Belongs to the archaeal Rpo5/eukaryotic RPB5 RNA polymerase subunit family.

Functionally, component of the DNA-dependent RNA polymerase that catalyzes the transcription in the cytoplasm of viral DNA into RNA using the four ribonucleoside triphosphates as substrates. The protein is Putative DNA-directed RNA polymerase subunit 454R of Invertebrate iridescent virus 6 (IIV-6).